A 496-amino-acid chain; its full sequence is O-acetyltransferase cpsE (496 aa).

A compositionally biased stretch (polar residues) spans 203–217; it reads IGTQGQLPDGVQSSD. The disordered stretch occupies residues 203–228; the sequence is IGTQGQLPDGVQSSDDPTDGAGDIFE.

It belongs to the fumigaclavine B O-acetyltransferase family.

The enzyme catalyses campesine A + acetyl-CoA = campesine C + CoA. It participates in alkaloid biosynthesis. O-acetyltransferase; part of the gene cluster that mediates the biosynthesis of campesine G, a dimeric indole piperazine alkaloid that shows good insecticidal activity Galleria mellonella. Within the pathway, cpsE acetylates N13 of campesine A to produce campesine C. CpsE produces an inseparable mixture of two acyl-atropisomers due to the spontaneous rotation of an acyl group at N13 of piperazine ring. The non-canonical non-ribosomal peptide synthetase cpsA catalyzes the first steps of the pathway by producing L-tryptophanal and L-valinal from their respective amino-acids. These products condensate spontaneously to form trypyl-valyl pyrazine also known as didehydrocampesine A. The NmrA-like family domain-containing oxidoreductase cpsB is the next enzyme in cps pathway and reduces the unstable didehydrocampesine A to campesine A. The methyltransferase cpsF and the acetyltransferase cpsE both recognize N13 of piperazine ring to carry out methylation and acetylation of campesine A to produce campesine C and B, respectively. The cytochrome P450 monooxygenase cpsD then acts as a dimerase that catalyzes oxidative heterocoupling between campesine B and C to produce heterodimers with unexpected 6/5/6/6/6/6/5/6 eight-ring scaffold called campesine D. Finally,the cytochrome P450 monooxygenase cpsC is a regioselective dehydrogenase that catalyzes dehydrogenation reaction towards C2-N1 to produce campesine G. The sequence is that of O-acetyltransferase cpsE from Aspergillus campestris (strain IBT 28561).